The sequence spans 594 residues: 3-hydroxy-3-methylglutaryl coenzyme A reductase 2-A (594 aa).

Positions methionine 1 to alanine 32 are disordered. Over methionine 1–proline 37 the chain is Lumenal. The chain crosses the membrane as a helical span at residues leucine 38–leucine 58. Over leucine 59–alanine 81 the chain is Cytoplasmic. Residues alanine 82–valine 102 form a helical membrane-spanning segment. Over arginine 103–arginine 549 the chain is Lumenal. Asparagine 261 carries an N-linked (GlcNAc...) asparagine glycan. Glutamate 273 functions as the Charge relay system in the catalytic mechanism. Asparagine 337 carries N-linked (GlcNAc...) asparagine glycosylation. Residues lysine 405 and aspartate 481 each act as charge relay system in the active site. The chain crosses the membrane as a helical span at residues leucine 550–leucine 570. The Cytoplasmic portion of the chain corresponds to alanine 571–serine 594. Catalysis depends on histidine 579, which acts as the Proton donor.

The protein belongs to the HMG-CoA reductase family. Mostly expressed in the petioles of seedlings, seedlings and roots, and, to a lower extent, in seeds, leaves, stems and flowers.

Its subcellular location is the endoplasmic reticulum membrane. The protein localises to the plastid. It is found in the chloroplast membrane. It localises to the peroxisome membrane. It carries out the reaction (R)-mevalonate + 2 NADP(+) + CoA = (3S)-3-hydroxy-3-methylglutaryl-CoA + 2 NADPH + 2 H(+). It participates in metabolic intermediate biosynthesis; (R)-mevalonate biosynthesis; (R)-mevalonate from acetyl-CoA: step 3/3. Competitive inhibition by mevinolin (Mev) is leading to a significant reduction of total ginsenoside in adventitious roots. Triggered by darkness. Catalyzes the synthesis of mevalonate, the specific precursor of all isoprenoid compounds present in plants. Component of the triterpene saponins (e.g. ginsenosides or panaxosides) and phytosterols biosynthetic pathways. The polypeptide is 3-hydroxy-3-methylglutaryl coenzyme A reductase 2-A (Panax ginseng (Korean ginseng)).